We begin with the raw amino-acid sequence, 122 residues long: Succinate dehydrogenase assembly factor 2, mitochondrial (122 aa).

The protein belongs to the SDHAF2 family. As to quaternary structure, interacts with the flavoprotein subunit within the SDH catalytic dimer.

The protein resides in the mitochondrion matrix. Plays an essential role in the assembly of succinate dehydrogenase (SDH), an enzyme complex (also referred to as respiratory complex II) that is a component of both the tricarboxylic acid (TCA) cycle and the mitochondrial electron transport chain, and which couples the oxidation of succinate to fumarate with the reduction of ubiquinone (coenzyme Q) to ubiquinol. Required for flavinylation (covalent attachment of FAD) of the flavoprotein subunit of the SDH catalytic dimer. The chain is Succinate dehydrogenase assembly factor 2, mitochondrial from Caenorhabditis briggsae.